The chain runs to 950 residues: Protein lin-54 homolog (950 aa).

Disordered regions lie at residues 1–63 (MDTS…DSLN), 366–387 (NASA…TSSG), 500–523 (ASKP…PRKH), 533–552 (KQSA…GPEA), and 638–702 (VENK…LPPG). Positions 10–26 (SLDDTEPLPELSFEDFL) are enriched in acidic residues. Residues 29 to 39 (TSEKSSQHMEI) are compositionally biased toward basic and acidic residues. Over residues 40–55 (EALDSEEDNIGGEDLA) the composition is skewed to acidic residues. Composition is skewed to low complexity over residues 366 to 386 (NASA…STSS), 500 to 516 (ASKP…PSAS), 535 to 548 (SASV…SSDA), and 661 to 682 (QQQS…QQQL). One can recognise a CRC domain in the interval 737 to 849 (RRKHCNCSKS…KCVGCRNMED (113 aa)).

The protein belongs to the lin-54 family. In terms of assembly, component of the DREAM complex at least composed of Myb, Caf1-55, mip40, mip120, mip130, E2f2, Dp, Rbf, Rbf2, lin-52, HDAC1/Rpd3 and l(3)mbt.

Its subcellular location is the nucleus. Its function is as follows. Component of the DREAM complex, a multiprotein complex that can both act as a transcription activator or repressor depending on the context. In follicle cells, the complex plays a central role in the site-specific DNA replication at the chorion loci. During development, the complex represses transcription of developmentally controlled E2F target genes. The protein is Protein lin-54 homolog (mip120) of Drosophila melanogaster (Fruit fly).